Here is a 290-residue protein sequence, read N- to C-terminus: Fructose-1,6-bisphosphatase class 1 (290 aa).

Mg(2+) is bound by residues Glu78, Asp96, Leu98, and Asp99. Substrate is bound by residues 99–102, Tyr201, and Lys226; that span reads DGSS. Glu232 is a Mg(2+) binding site.

The protein belongs to the FBPase class 1 family. As to quaternary structure, homotetramer. Requires Mg(2+) as cofactor.

It localises to the cytoplasm. It carries out the reaction beta-D-fructose 1,6-bisphosphate + H2O = beta-D-fructose 6-phosphate + phosphate. Its pathway is carbohydrate biosynthesis; gluconeogenesis. This Helicobacter pylori (strain J99 / ATCC 700824) (Campylobacter pylori J99) protein is Fructose-1,6-bisphosphatase class 1.